Reading from the N-terminus, the 87-residue chain is Small ribosomal subunit protein bS20 (87 aa).

Positions 1–29 (MANTAQARKRARQAVKQNAHNSSQRSTLR) are disordered. Residues 20–29 (HNSSQRSTLR) show a composition bias toward polar residues.

The protein belongs to the bacterial ribosomal protein bS20 family.

In terms of biological role, binds directly to 16S ribosomal RNA. The protein is Small ribosomal subunit protein bS20 of Herminiimonas arsenicoxydans.